The primary structure comprises 417 residues: Phosphoglycerate kinase (417 aa).

(2R)-3-phosphoglycerate contacts are provided by V23, D24, F25, N26, Q38, R39, S62, H63, G65, R66, L121, R122, H169, and R170. Position 213 (G213) interacts with ADP. Residue G213 coordinates CDP. The AMP site is built by A214 and K215. A214 lines the ATP pocket. A214 contributes to the Mg(2+) binding site. A CDP-binding site is contributed by D218. Residue D218 participates in Mg(2+) binding. K219 provides a ligand contact to AMP. K219 contacts ATP. Residue G237 participates in ADP binding. Position 237 (G237) interacts with CDP. AMP contacts are provided by G238 and G312. 2 residues coordinate ATP: G238 and G312. 2 residues coordinate CDP: G337 and F342. F342 is a binding site for ADP. Position 343 (E343) interacts with AMP. Residues E343, D374, and T375 each contribute to the ATP site. D374 is a Mg(2+) binding site.

The protein belongs to the phosphoglycerate kinase family. In terms of assembly, monomer. Mg(2+) is required as a cofactor.

The protein localises to the cytoplasm. It is found in the secreted. It localises to the cell wall. Its subcellular location is the mitochondrion. It carries out the reaction (2R)-3-phosphoglycerate + ATP = (2R)-3-phospho-glyceroyl phosphate + ADP. The protein operates within carbohydrate degradation; glycolysis; pyruvate from D-glyceraldehyde 3-phosphate: step 2/5. Its function is as follows. Catalyzes one of the two ATP producing reactions in the glycolytic pathway via the reversible conversion of 1,3-diphosphoglycerate to 3-phosphoglycerate. Both L- and D- forms of purine and pyrimidine nucleotides can be used as substrates, but the activity is much lower on pyrimidines. Negatively regulates the biosynthesis of acetyl-CoA from pyruvate in the mitochondrion. The polypeptide is Phosphoglycerate kinase (PGK1) (Candida albicans (strain SC5314 / ATCC MYA-2876) (Yeast)).